A 278-amino-acid chain; its full sequence is ABC transporter I family member 11, chloroplastic (278 aa).

The transit peptide at 1–49 (MAVSTFSSPTPVFGIAEPPASFSSTAIGWKQPLRFRRTKKPRVISCDYS) directs the protein to the chloroplast. Residues 51–278 (IEVRDVCYRP…GVLVAERPPL (228 aa)) enclose the ABC transporter domain. 85–92 (GKSGSGKT) is a binding site for ATP.

The protein belongs to the ABC transporter superfamily. ABCI family.

Its subcellular location is the plastid. The protein resides in the chloroplast. The chain is ABC transporter I family member 11, chloroplastic (ABCI11) from Arabidopsis thaliana (Mouse-ear cress).